Here is a 324-residue protein sequence, read N- to C-terminus: MNKIVLYLLIYVGTFSAAYDLLKAPSYFEDFLHNFNKNYSSKSEKLHRFKIFQHNLEEIINKNLNDTSAQYEINKFSDLSKDETISKYTGLSLPLQNQNFCEVVVLNRPPDKGPLEFDWRRLNKVTSVKNQGTCGACWAFATLGSLESQFAIKHDQLINLSEQQLIDCDFVDMGCDGGLLHTAYEAVMNMGGIQAENDYPYEANNGDCRLNAAKFVVKVKKCYRYVLMFEEKLKDLLRIVGPLPVAIDASDIVNYKRGVIRYCANHGLNHAVLLVGYAVENGVPFWILKNTWGTDWGEQGYFRVQQNINACGIQNELPSSAEIY.

Residues 1–18 (MNKIVLYLLIYVGTFSAA) form the signal peptide. Positions 19–113 (YDLLKAPSYF…VVLNRPPDKG (95 aa)) are cleaved as a propeptide — activation peptide. Disulfide bonds link C134-C175, C168-C208, and C263-C311. Residue C137 is part of the active site. The N-linked (GlcNAc...) asparagine; by host glycan is linked to N159. Active-site residues include H270 and N290.

It belongs to the peptidase C1 family. Post-translationally, synthesized as an inactive proenzyme and activated by proteolytic removal of the inhibitory propeptide.

It catalyses the reaction Endopeptidase of broad specificity, hydrolyzing substrates of both cathepsin L and cathepsin B.. Functionally, cysteine protease that plays an essential role in host liquefaction to facilitate horizontal transmission of the virus. May participate in the degradation of foreign protein expressed by the baculovirus system. The chain is Viral cathepsin (Vcath) from Choristoneura fumiferana defective polyhedrosis virus (Cfdef).